The following is a 435-amino-acid chain: ATP-dependent protease ATPase subunit HslU (435 aa).

ATP contacts are provided by residues valine 18, 60–65 (GVGKTE), aspartate 248, glutamate 313, and arginine 385.

This sequence belongs to the ClpX chaperone family. HslU subfamily. A double ring-shaped homohexamer of HslV is capped on each side by a ring-shaped HslU homohexamer. The assembly of the HslU/HslV complex is dependent on binding of ATP.

It is found in the cytoplasm. Functionally, ATPase subunit of a proteasome-like degradation complex; this subunit has chaperone activity. The binding of ATP and its subsequent hydrolysis by HslU are essential for unfolding of protein substrates subsequently hydrolyzed by HslV. HslU recognizes the N-terminal part of its protein substrates and unfolds these before they are guided to HslV for hydrolysis. This is ATP-dependent protease ATPase subunit HslU from Xanthobacter autotrophicus (strain ATCC BAA-1158 / Py2).